A 172-amino-acid polypeptide reads, in one-letter code: MVKFLLIVLALGVSCAHHENLDISPSEVNGDWRTLYIVADNVEKVAEGGSLRAYFQHMECGDECQELKIIFNVKLDSECQTHTVVGQKHEDGRYTTDYSGRNYFHVLKKTDDIIFFHNVNVDESGRRQCDLVAGKREDLNKAQKQELRKLAEEYNIPNENTQHLVPTDTCNQ.

The signal sequence occupies residues 1–15 (MVKFLLIVLALGVSC). 2 disulfide bridges follow: Cys60/Cys64 and Cys79/Cys170.

Belongs to the calycin superfamily. Lipocalin family. As to quaternary structure, homodimer.

The protein resides in the secreted. In terms of biological role, this protein is found in nasal epithelium and it binds a wide variety of chemical odorants. This chain is Odorant-binding protein (Obp1f), found in Rattus norvegicus (Rat).